The sequence spans 149 residues: Arginine regulator (149 aa).

The protein belongs to the ArgR family.

The protein localises to the cytoplasm. Its pathway is amino-acid degradation; L-arginine degradation via ADI pathway. Regulates the transcription of the arc operon, involved in arginine catabolism. The sequence is that of Arginine regulator (argR1) from Bacillus thuringiensis subsp. konkukian (strain 97-27).